We begin with the raw amino-acid sequence, 154 residues long: MIIKNLQAFSRLLILNSPLIAIDYGSKKLGIALSNQERSIAMPLNTITEINKKIVITSLLSIVEKYKVCGVVIGMPIDMSGAVTEQTNMVMKFAEEFTKSINLPIYLQDERLTTKAANNFLKSFGMKRKDRDNNDDAVAASMILETVLDSMKNI.

This sequence belongs to the YqgF nuclease family.

The protein localises to the cytoplasm. Its function is as follows. Could be a nuclease involved in processing of the 5'-end of pre-16S rRNA. The chain is Putative pre-16S rRNA nuclease from Rickettsia akari (strain Hartford).